We begin with the raw amino-acid sequence, 349 residues long: Probable arabinogalactan endo-beta-1,4-galactanase A (349 aa).

A signal peptide spans 1 to 15 (MLLSFLPLLPLATAA). Asn-126 carries an N-linked (GlcNAc...) asparagine glycan. Catalysis depends on Glu-150, which acts as the Proton donor. Glu-261 functions as the Nucleophile in the catalytic mechanism.

The protein belongs to the glycosyl hydrolase 53 family.

The protein localises to the secreted. The catalysed reaction is The enzyme specifically hydrolyzes (1-&gt;4)-beta-D-galactosidic linkages in type I arabinogalactans.. In terms of biological role, endogalactanase involved in the degradation of plant cell wall polysaccharides, and more particularly of hairy regions of pectin. This is Probable arabinogalactan endo-beta-1,4-galactanase A (galA) from Aspergillus terreus (strain NIH 2624 / FGSC A1156).